Reading from the N-terminus, the 360-residue chain is MSLSRLHIDSFRNIASAQLQLGDGLNLIYGQNGSGKTSILEAIFFLGMGRSFRSHLSQRVIQNDQDKLTLFAQLEQGEQETKIGLRRYRSGETEVKMNGEKVKRLSTLAETLPIQVITPESFSLLFEGPKSRRQFIDWGAFHTDKSFYTAWANVRRILKHRNQMLKSETPYQQIQFWDKELVRYAEIVTEIRKRYVGSLNERLKGIIEEFLPQVDVKVSFTRGWDSKTDYQTLLQAQYPRDLAAGHTASGPHKADLRLRVGTLPVQDALSRGQLKLLVCALRIAQGKLLKQQIDKNSIYLVDDLPSELDARHRQLLLQQLSDTGAQVFVTAIEPAAIMDSLNTPPVKVFHVEQGRVTVIE.

An ATP-binding site is contributed by 30 to 37 (GQNGSGKT).

Belongs to the RecF family.

The protein localises to the cytoplasm. In terms of biological role, the RecF protein is involved in DNA metabolism; it is required for DNA replication and normal SOS inducibility. RecF binds preferentially to single-stranded, linear DNA. It also seems to bind ATP. The chain is DNA replication and repair protein RecF from Shewanella loihica (strain ATCC BAA-1088 / PV-4).